A 286-amino-acid chain; its full sequence is Ribosome-inactivating protein momordin I (286 aa).

An N-terminal signal peptide occupies residues 1 to 23 (MSRFSVLSFLILAIFLGGSIVKG). Residue glutamate 183 is part of the active site. N-linked (GlcNAc...) asparagine glycosylation occurs at asparagine 250. The propeptide at 270–286 (AEGDNGDVSTTHGFSSY) is removed in mature form.

Belongs to the ribosome-inactivating protein family. Type 1 RIP subfamily.

It catalyses the reaction Endohydrolysis of the N-glycosidic bond at one specific adenosine on the 28S rRNA.. This Momordica charantia (Bitter gourd) protein is Ribosome-inactivating protein momordin I.